The chain runs to 639 residues: Phosphomethylpyrimidine synthase (639 aa).

Residues 49 to 71 (DTPTDFGGEQNRPVRVYDTSGPY) form a disordered region. Substrate-binding positions include asparagine 231, methionine 260, tyrosine 289, histidine 325, 345 to 347 (SRG), 386 to 389 (DGLR), and glutamate 425. Position 429 (histidine 429) interacts with Zn(2+). Residue tyrosine 452 participates in substrate binding. Position 493 (histidine 493) interacts with Zn(2+). Positions 573, 576, and 581 each coordinate [4Fe-4S] cluster.

Belongs to the ThiC family. Homodimer. It depends on [4Fe-4S] cluster as a cofactor.

The catalysed reaction is 5-amino-1-(5-phospho-beta-D-ribosyl)imidazole + S-adenosyl-L-methionine = 4-amino-2-methyl-5-(phosphooxymethyl)pyrimidine + CO + 5'-deoxyadenosine + formate + L-methionine + 3 H(+). It functions in the pathway cofactor biosynthesis; thiamine diphosphate biosynthesis. Functionally, catalyzes the synthesis of the hydroxymethylpyrimidine phosphate (HMP-P) moiety of thiamine from aminoimidazole ribotide (AIR) in a radical S-adenosyl-L-methionine (SAM)-dependent reaction. In Teredinibacter turnerae (strain ATCC 39867 / T7901), this protein is Phosphomethylpyrimidine synthase.